A 1013-amino-acid polypeptide reads, in one-letter code: Sodium/potassium-transporting ATPase subunit alpha-3 (1013 aa).

Residues 1–24 (MGDKKDDKDSPKKNKGKERRDLDD) are disordered. Topologically, residues 1 to 77 (MGDKKDDKDS…NALTPPPTTP (77 aa)) are cytoplasmic. Phosphoserine occurs at positions 37 and 56. Residues 72 to 74 (PPP) form an interaction with phosphoinositide-3 kinase region. Residues 78-98 (EWVKFCRQLFGGFSILLWIGA) form a helical membrane-spanning segment. The Extracellular segment spans residues 99-121 (ILCFLAYGIQAGTEDDPSGDNLY). Residues 122-142 (LGIVLAAVVIITGCFSYYQEA) traverse the membrane as a helical segment. Topologically, residues 143 to 278 (KSSKIMESFK…VGKTPIAIEI (136 aa)) are cytoplasmic. Ser218 and Ser265 each carry phosphoserine. The chain crosses the membrane as a helical span at residues 279–298 (EHFIQLITGVAVFLGVSFFI). The Extracellular segment spans residues 299–310 (LSLILGYTWLEA). The helical transmembrane segment at 311-328 (VIFLIGIIVANVPEGLLA) threads the bilayer. The Cytoplasmic portion of the chain corresponds to 329 to 762 (TVTVCLTLTA…EEGRLIFDNL (434 aa)). The active-site 4-aspartylphosphate intermediate is Asp366. Ser442 carries the post-translational modification Phosphoserine. Tyr548 carries the post-translational modification Phosphotyrosine. Asp707 and Asp711 together coordinate Mg(2+). A helical transmembrane segment spans residues 763-782 (KKSIAYTLTSNIPEITPFLL). The Extracellular portion of the chain corresponds to 783-792 (FIMANIPLPL). The chain crosses the membrane as a helical span at residues 793-813 (GTITILCIDLGTDMVPAISLA). Residues 814–833 (YEAAESDIMKRQPRNPRTDK) lie on the Cytoplasmic side of the membrane. A helical membrane pass occupies residues 834–856 (LVNERLISMAYGQIGMIQALGGF). Over 857–908 (FSYFVILAENGFLPGNLVGIRLNWDDRTVNDLEDSYGQQWTYEQRKVVEFTC) the chain is Extracellular. A helical transmembrane segment spans residues 909–928 (HTAFFVSIVVVQWADLIICK). Residues 929–941 (TRRNSVFQQGMKN) are Cytoplasmic-facing. Ser933 is modified (phosphoserine; by PKA). A helical transmembrane segment spans residues 942-960 (KILIFGLFEETALAAFLSY). The Extracellular segment spans residues 961-975 (CPGMDVALRMYPLKP). The chain crosses the membrane as a helical span at residues 976 to 996 (SWWFCAFPYSFLIFVYDEIRK). Residues 997–1013 (LILRRNPGGWVEKETYY) are Cytoplasmic-facing.

The protein belongs to the cation transport ATPase (P-type) (TC 3.A.3) family. Type IIC subfamily. In terms of assembly, the sodium/potassium-transporting ATPase is composed of a catalytic alpha subunit, an auxiliary non-catalytic beta subunit and an additional regulatory subunit. Interacts with regulatory subunit FXYD1.

The protein resides in the cell membrane. The catalysed reaction is K(+)(out) + Na(+)(in) + ATP + H2O = K(+)(in) + Na(+)(out) + ADP + phosphate + H(+). Functionally, this is the catalytic component of the active enzyme, which catalyzes the hydrolysis of ATP coupled with the exchange of sodium and potassium ions across the plasma membrane. This action creates the electrochemical gradient of sodium and potassium ions, providing the energy for active transport of various nutrients. The sequence is that of Sodium/potassium-transporting ATPase subunit alpha-3 (ATP1A3) from Homo sapiens (Human).